The sequence spans 114 residues: Putative pterin-4-alpha-carbinolamine dehydratase (114 aa).

Belongs to the pterin-4-alpha-carbinolamine dehydratase family.

The catalysed reaction is (4aS,6R)-4a-hydroxy-L-erythro-5,6,7,8-tetrahydrobiopterin = (6R)-L-erythro-6,7-dihydrobiopterin + H2O. The protein is Putative pterin-4-alpha-carbinolamine dehydratase of Pseudoalteromonas translucida (strain TAC 125).